We begin with the raw amino-acid sequence, 76 residues long: Kappa-actitoxin-Avd4l (76 aa).

Positions 1-19 are cleaved as a signal peptide; it reads MNKALFLCLVVLCAAVVFA. Positions 20–31 are excised as a propeptide; it reads AEDLQKAKHAPF. Intrachain disulfides connect Cys37–Cys72, Cys39–Cys65, and Cys55–Cys73.

It belongs to the sea anemone type 3 (BDS) potassium channel toxin family. As to expression, weakly expressed in the ectodermal tissue from the distal and proximal tentacles, body wall, and oral disk.

It is found in the secreted. The protein resides in the nematocyst. In terms of biological role, blocks Kv3 voltage-gated potassium channels. Reduces blood pressure. The chain is Kappa-actitoxin-Avd4l from Anemonia viridis (Snakelocks anemone).